Consider the following 156-residue polypeptide: Peptide deformylase 1 (156 aa).

Fe cation contacts are provided by Cys-90 and His-132. Residue Glu-133 is part of the active site. His-136 contacts Fe cation.

This sequence belongs to the polypeptide deformylase family. The cofactor is Fe(2+).

The enzyme catalyses N-terminal N-formyl-L-methionyl-[peptide] + H2O = N-terminal L-methionyl-[peptide] + formate. Functionally, removes the formyl group from the N-terminal Met of newly synthesized proteins. Requires at least a dipeptide for an efficient rate of reaction. N-terminal L-methionine is a prerequisite for activity but the enzyme has broad specificity at other positions. The sequence is that of Peptide deformylase 1 from Bacillus cereus (strain ATCC 14579 / DSM 31 / CCUG 7414 / JCM 2152 / NBRC 15305 / NCIMB 9373 / NCTC 2599 / NRRL B-3711).